Consider the following 250-residue polypeptide: 5-oxoprolinase subunit A (250 aa).

The protein belongs to the LamB/PxpA family. In terms of assembly, forms a complex composed of PxpA, PxpB and PxpC.

It carries out the reaction 5-oxo-L-proline + ATP + 2 H2O = L-glutamate + ADP + phosphate + H(+). Its function is as follows. Catalyzes the cleavage of 5-oxoproline to form L-glutamate coupled to the hydrolysis of ATP to ADP and inorganic phosphate. In Klebsiella pneumoniae (strain 342), this protein is 5-oxoprolinase subunit A.